We begin with the raw amino-acid sequence, 843 residues long: Elongation factor 2 (843 aa).

One can recognise a tr-type G domain in the interval 17-253 (HNIRNMSVIA…LWGENFFDPA (237 aa)). 26–33 (AHVDHGKS) is a binding site for GTP. Residues Thr57 and Thr59 each carry the phosphothreonine modification. 158–161 (NKMD) contributes to the GTP binding site. His700 is modified (diphthamide).

Belongs to the TRAFAC class translation factor GTPase superfamily. Classic translation factor GTPase family. EF-G/EF-2 subfamily. In terms of processing, phosphorylation by EF-2 kinase completely inactivates EF-2.

It is found in the cytoplasm. It carries out the reaction GTP + H2O = GDP + phosphate + H(+). Catalyzes the GTP-dependent ribosomal translocation step during translation elongation. During this step, the ribosome changes from the pre-translocational (PRE) to the post-translocational (POST) state as the newly formed A-site-bound peptidyl-tRNA and P-site-bound deacylated tRNA move to the P and E sites, respectively. Catalyzes the coordinated movement of the two tRNA molecules, the mRNA and conformational changes in the ribosome. This Beta vulgaris (Sugar beet) protein is Elongation factor 2.